The primary structure comprises 564 residues: 2-succinyl-5-enolpyruvyl-6-hydroxy-3-cyclohexene-1-carboxylate synthase (564 aa).

This sequence belongs to the TPP enzyme family. MenD subfamily. Homodimer. It depends on Mg(2+) as a cofactor. The cofactor is Mn(2+). Thiamine diphosphate serves as cofactor.

The catalysed reaction is isochorismate + 2-oxoglutarate + H(+) = 5-enolpyruvoyl-6-hydroxy-2-succinyl-cyclohex-3-ene-1-carboxylate + CO2. Its pathway is quinol/quinone metabolism; 1,4-dihydroxy-2-naphthoate biosynthesis; 1,4-dihydroxy-2-naphthoate from chorismate: step 2/7. It functions in the pathway quinol/quinone metabolism; menaquinone biosynthesis. In terms of biological role, catalyzes the thiamine diphosphate-dependent decarboxylation of 2-oxoglutarate and the subsequent addition of the resulting succinic semialdehyde-thiamine pyrophosphate anion to isochorismate to yield 2-succinyl-5-enolpyruvyl-6-hydroxy-3-cyclohexene-1-carboxylate (SEPHCHC). The protein is 2-succinyl-5-enolpyruvyl-6-hydroxy-3-cyclohexene-1-carboxylate synthase of Vibrio vulnificus (strain CMCP6).